The following is a 427-amino-acid chain: Serine--tRNA ligase (427 aa).

231–233 is a binding site for L-serine; sequence TAE. 262 to 264 serves as a coordination point for ATP; the sequence is RSE. An L-serine-binding site is contributed by E285. An ATP-binding site is contributed by 349-352; that stretch reads EISS. S385 serves as a coordination point for L-serine.

It belongs to the class-II aminoacyl-tRNA synthetase family. Type-1 seryl-tRNA synthetase subfamily. In terms of assembly, homodimer. The tRNA molecule binds across the dimer.

It localises to the cytoplasm. The enzyme catalyses tRNA(Ser) + L-serine + ATP = L-seryl-tRNA(Ser) + AMP + diphosphate + H(+). It catalyses the reaction tRNA(Sec) + L-serine + ATP = L-seryl-tRNA(Sec) + AMP + diphosphate + H(+). Its pathway is aminoacyl-tRNA biosynthesis; selenocysteinyl-tRNA(Sec) biosynthesis; L-seryl-tRNA(Sec) from L-serine and tRNA(Sec): step 1/1. Catalyzes the attachment of serine to tRNA(Ser). Is also able to aminoacylate tRNA(Sec) with serine, to form the misacylated tRNA L-seryl-tRNA(Sec), which will be further converted into selenocysteinyl-tRNA(Sec). The chain is Serine--tRNA ligase from Hahella chejuensis (strain KCTC 2396).